We begin with the raw amino-acid sequence, 467 residues long: MKHIVKHIHFVGIGGVGMSGIAEVLVNLGYQVSGSDLTSNAITDRLAALGARIAIGHAAENIEGANAVVVSTAVRSDNPEVLAARHRRIPIVPRAVMLAELMRLKQGIAIAGTHGKTTTTSLVASVLAAGGLDPTFVIGGRLISAGANARLGTGDFIVAEADESDASFLNLFPVIEVITNIDADHMDTYGHDFARLKQAFIEFTHRLPFYGIAVLCVDDPNVKEILPFVSKPIIRYGFAPDAQVRAVNVQARDGKMHFTAMREDAAPLDIVLNLPGEHNVQNALAAIAIATELEVKDADIQRALADFNGVGRRFQRYGEVPVFSEGSTNGAYTLVDDYGHHPVEMAATVAAARGAFPGRRLVLAFQPHRFTRTRDCFEDFVKVLSTVDALVLTEVYSAGESPIVAADGRALARALRVAGKVEPVFVDTVDEVPDALSAIVRDGDVVITMGAGSIGGVPARLAQETKV.

112 to 118 is an ATP binding site; it reads GTHGKTT.

This sequence belongs to the MurCDEF family.

It localises to the cytoplasm. The enzyme catalyses UDP-N-acetyl-alpha-D-muramate + L-alanine + ATP = UDP-N-acetyl-alpha-D-muramoyl-L-alanine + ADP + phosphate + H(+). It participates in cell wall biogenesis; peptidoglycan biosynthesis. Cell wall formation. The polypeptide is UDP-N-acetylmuramate--L-alanine ligase (Paraburkholderia xenovorans (strain LB400)).